Here is a 258-residue protein sequence, read N- to C-terminus: Snake venom serine protease 3 (258 aa).

A signal peptide spans 1 to 18 (MVLIRVLANLLILQLSYA). A propeptide spanning residues 19 to 24 (QKSSEL) is cleaved from the precursor. Positions 25 to 249 (IIGGHPCNIN…YTDWIQSIIA (225 aa)) constitute a Peptidase S1 domain. Disulfide bonds link cysteine 31–cysteine 163, cysteine 50–cysteine 66, cysteine 98–cysteine 256, cysteine 142–cysteine 210, cysteine 174–cysteine 189, and cysteine 200–cysteine 225. Asparagine 44 carries an N-linked (GlcNAc...) asparagine glycan. Catalysis depends on charge relay system residues histidine 65 and aspartate 110. Serine 204 serves as the catalytic Charge relay system. An N-linked (GlcNAc...) asparagine glycan is attached at asparagine 239.

The protein belongs to the peptidase S1 family. Snake venom subfamily. Monomer. Expressed by the venom gland.

The protein localises to the secreted. In terms of biological role, snake venom serine protease that may act in the hemostasis system of the prey. In Protobothrops jerdonii (Jerdon's pitviper), this protein is Snake venom serine protease 3.